A 303-amino-acid chain; its full sequence is L(+)-tartrate dehydratase subunit alpha (303 aa).

Iron-sulfur cluster-binding residues include Cys-71, Cys-190, and Cys-277.

It belongs to the class-I fumarase family. As to quaternary structure, tetramer of two alpha and two beta subunits. The cofactor is iron-sulfur cluster.

The enzyme catalyses (2R,3R)-tartrate = oxaloacetate + H2O. The protein is L(+)-tartrate dehydratase subunit alpha (ttdA) of Escherichia coli O6:H1 (strain CFT073 / ATCC 700928 / UPEC).